Here is a 546-residue protein sequence, read N- to C-terminus: Phenylalanine--tRNA ligase beta subunit (546 aa).

A B5 domain is found at leucine 266–alanine 342. Positions 320, 326, 329, and 330 each coordinate Mg(2+).

Belongs to the phenylalanyl-tRNA synthetase beta subunit family. Type 2 subfamily. In terms of assembly, tetramer of two alpha and two beta subunits. Mg(2+) is required as a cofactor.

The protein resides in the cytoplasm. It carries out the reaction tRNA(Phe) + L-phenylalanine + ATP = L-phenylalanyl-tRNA(Phe) + AMP + diphosphate + H(+). This Methanoculleus marisnigri (strain ATCC 35101 / DSM 1498 / JR1) protein is Phenylalanine--tRNA ligase beta subunit.